We begin with the raw amino-acid sequence, 185 residues long: DNA-directed RNA polymerase 21 kDa subunit (185 aa).

The protein belongs to the poxviridae DNA-directed RNA polymerase 22 kDa subunit family. As to quaternary structure, the DNA-dependent RNA polymerase used for intermediate and late genes expression consists of eight subunits Rpo30/OPG66, Rpo7/OPG90, Rpo22/OPG103, Rpo147/OPG105, Rpo18/OPG119, Rpo19/OPG131, Rpo132/OPG151 and Rpo35/OPG156. The same holoenzyme, with the addition of the transcription-specificity factor OPG109, is used for early gene expression.

It is found in the virion. It catalyses the reaction RNA(n) + a ribonucleoside 5'-triphosphate = RNA(n+1) + diphosphate. Part of the DNA-dependent RNA polymerase which catalyzes the transcription of viral DNA into RNA using the four ribonucleoside triphosphates as substrates. Responsible for the transcription of early, intermediate and late genes. DNA-dependent RNA polymerase associates with the early transcription factor (ETF), itself composed of OPG118 and OPG133, thereby allowing the early genes transcription. Late transcription, and probably also intermediate transcription, require newly synthesized RNA polymerase. This is DNA-directed RNA polymerase 21 kDa subunit (OPG103) from Oryctolagus cuniculus (Rabbit).